The following is a 256-amino-acid chain: 5-keto-4-deoxy-D-glucarate aldolase (256 aa).

His50 (proton acceptor) is an active-site residue. Gln151 is a binding site for substrate. Glu153 is a binding site for Mg(2+). Substrate is bound by residues Ser178 and Asp179. Asp179 is a binding site for Mg(2+).

Belongs to the HpcH/HpaI aldolase family. KDGluc aldolase subfamily. Homohexamer; trimer of dimers. Mg(2+) serves as cofactor.

The catalysed reaction is 5-dehydro-4-deoxy-D-glucarate = 2-hydroxy-3-oxopropanoate + pyruvate. It catalyses the reaction 2-dehydro-3-deoxy-D-glucarate = 2-hydroxy-3-oxopropanoate + pyruvate. It functions in the pathway carbohydrate acid metabolism; galactarate degradation; D-glycerate from galactarate: step 2/3. In terms of biological role, catalyzes the reversible retro-aldol cleavage of both 5-keto-4-deoxy-D-glucarate and 2-keto-3-deoxy-D-glucarate to pyruvate and tartronic semialdehyde. The sequence is that of 5-keto-4-deoxy-D-glucarate aldolase from Shigella sonnei (strain Ss046).